The sequence spans 446 residues: Na(+)-translocating NADH-quinone reductase subunit A (446 aa).

It belongs to the NqrA family. As to quaternary structure, composed of six subunits; NqrA, NqrB, NqrC, NqrD, NqrE and NqrF.

The catalysed reaction is a ubiquinone + n Na(+)(in) + NADH + H(+) = a ubiquinol + n Na(+)(out) + NAD(+). NQR complex catalyzes the reduction of ubiquinone-1 to ubiquinol by two successive reactions, coupled with the transport of Na(+) ions from the cytoplasm to the periplasm. NqrA to NqrE are probably involved in the second step, the conversion of ubisemiquinone to ubiquinol. In Psychromonas ingrahamii (strain DSM 17664 / CCUG 51855 / 37), this protein is Na(+)-translocating NADH-quinone reductase subunit A.